Consider the following 280-residue polypeptide: Pupal cuticle protein 36a (280 aa).

A signal peptide spans Met-1–Ala-15. The region spanning Ala-135–Pro-198 is the Chitin-binding type R&amp;R domain. The disordered stretch occupies residues Gly-258–Met-280.

In Manduca sexta (Tobacco hawkmoth), this protein is Pupal cuticle protein 36a (PCP36a).